Reading from the N-terminus, the 370-residue chain is tRNA 2-selenouridine synthase (370 aa).

The Rhodanese domain occupies Phe-12 to Gln-136. The active-site S-selanylcysteine intermediate is Cys-95.

Belongs to the SelU family. Monomer.

The catalysed reaction is 5-methylaminomethyl-2-thiouridine(34) in tRNA + selenophosphate + (2E)-geranyl diphosphate + H2O + H(+) = 5-methylaminomethyl-2-selenouridine(34) in tRNA + (2E)-thiogeraniol + phosphate + diphosphate. It carries out the reaction 5-methylaminomethyl-2-thiouridine(34) in tRNA + (2E)-geranyl diphosphate = 5-methylaminomethyl-S-(2E)-geranyl-thiouridine(34) in tRNA + diphosphate. The enzyme catalyses 5-methylaminomethyl-S-(2E)-geranyl-thiouridine(34) in tRNA + selenophosphate + H(+) = 5-methylaminomethyl-2-(Se-phospho)selenouridine(34) in tRNA + (2E)-thiogeraniol. It catalyses the reaction 5-methylaminomethyl-2-(Se-phospho)selenouridine(34) in tRNA + H2O = 5-methylaminomethyl-2-selenouridine(34) in tRNA + phosphate. Its function is as follows. Involved in the post-transcriptional modification of the uridine at the wobble position (U34) of tRNA(Lys), tRNA(Glu) and tRNA(Gln). Catalyzes the conversion of 2-thiouridine (S2U-RNA) to 2-selenouridine (Se2U-RNA). Acts in a two-step process involving geranylation of 2-thiouridine (S2U) to S-geranyl-2-thiouridine (geS2U) and subsequent selenation of the latter derivative to 2-selenouridine (Se2U) in the tRNA chain. The protein is tRNA 2-selenouridine synthase of Pseudomonas putida (strain GB-1).